A 307-amino-acid chain; its full sequence is Capsid assembly scaffolding protein (307 aa).

Composition is skewed to acidic residues over residues 45 to 54 (IELASDEVET) and 83 to 101 (EPTD…EGSE). A disordered region spans residues 45–105 (IELASDEVET…GTEGSEEFTP (61 aa)).

The protein belongs to the T7likevirus capsid assembly scaffolding protein family.

Scaffolding protein involved in the icosahedric procapsid assembly. Coassembles with the capsid proteins to form the procapsid, in which the scaffolding protein is found within the external shell of icosahedrally arranged capsid protein subunits. In a subsequent step the scaffolding protein molecules are released from the procapsid. Facilitates assembly by binding to gp10 hexamers but not the pentamers and locking them into a morphogenically correct conformation. The polypeptide is Capsid assembly scaffolding protein (Escherichia coli (Bacteriophage T7)).